Here is a 771-residue protein sequence, read N- to C-terminus: MAKKSNKSNKLSTLQKPSQKDFILTIDSDSEGENEIPDLEEESEVDQELKEEEKPKPKPKPKSKKNKKNKDINNDQEKTEEQEEINPNFTFSLDGFETSTAFDGWDFKVESNGDVTKKPISKDVDLDGILRRKGGLANLAGSDVKVDEKNDEVESEEVEEVEEDDEDEENEQEGDDDDDELALDGFGMSATEASANADDDQDEQEPEDDDEGVEADMDEEYPGSDQEDEKPVEDTAEDMAEFYADEEEATTAKKQLHTTFQSLQLSRPVLKGLSQLGYTKPSPIQSACIPIALLGKDIVAGAVTGSGKTAAYMIPIIERLLYKPAKISSTRVIVLAPTRELAIQVCDVGKKIGQFVNNLNFGLAVGGLNLRQQEQQLKTRPDIVIATPGRLIDHIRNSPSFSIDSLEVLVIDEADRMLDEGFQAELTEILSLIPRHKRQTLLYSATMNTKIQDLIQLSLQKPVRVMIDPPKSAAIKLVQEFVRIRKRDHLKPALLFQLIKSVDPSQQNRIVVFVARKESAHKLRIILGLLGMRVSELHGSLTQEQRLASVNDFKNLTVPVLICTDLAARGLDIPKIEIVINYDMPKTHEIYLHRVGRTARAGREGKSITFVGESTQDRAIVKDAIKSISEEQARNSKQGKAVSRNVDWKEVEELNKIVESKATVIEEVLDEEKQAKEMLHAEMELSKATNMIKHEKEIQSRPRRTWFESEKDKKHQTEVMQQLTKHGKKVNSHKRKAIEVKKENSSRSYKKTKQDRMSVQKKPKSNGKNKK.

3 disordered regions span residues 1 to 96 (MAKK…LDGF), 109 to 128 (VESN…DLDG), and 134 to 233 (GGLA…KPVE). The span at 28-46 (SDSEGENEIPDLEEESEVD) shows a compositional bias: acidic residues. Residues 33-84 (ENEIPDLEEESEVDQELKEEEKPKPKPKPKSKKNKKNKDINNDQEKTEEQEE) are a coiled coil. The segment covering 47-56 (QELKEEEKPK) has biased composition (basic and acidic residues). The span at 57–68 (PKPKPKSKKNKK) shows a compositional bias: basic residues. The segment covering 69-79 (NKDINNDQEKT) has biased composition (basic and acidic residues). Residues 85–96 (INPNFTFSLDGF) show a composition bias toward polar residues. Acidic residues-rich tracts occupy residues 149–182 (KNDE…DELA) and 197–233 (ADDD…KPVE). The Q motif motif lies at 258–286 (TTFQSLQLSRPVLKGLSQLGYTKPSPIQS). The Helicase ATP-binding domain maps to 289–465 (IPIALLGKDI…QLSLQKPVRV (177 aa)). Position 302-309 (302-309 (AVTGSGKT)) interacts with ATP. Positions 412–415 (DEAD) match the DEAD box motif. The region spanning 476 to 643 (KLVQEFVRIR…RNSKQGKAVS (168 aa)) is the Helicase C-terminal domain. Over residues 695 to 717 (EKEIQSRPRRTWFESEKDKKHQT) the composition is skewed to basic and acidic residues. Residues 695–771 (EKEIQSRPRR…KPKSNGKNKK (77 aa)) are disordered. Basic residues-rich tracts occupy residues 725-736 (KHGKKVNSHKRK) and 759-771 (VQKK…KNKK).

Belongs to the DEAD box helicase family. DDX27/DRS1 subfamily. As to quaternary structure, associates with pre-ribosomal particles.

Its subcellular location is the nucleus. The protein localises to the nucleolus. It carries out the reaction ATP + H2O = ADP + phosphate + H(+). Its function is as follows. ATP-binding RNA helicase involved in ribosome assembly. In Debaryomyces hansenii (strain ATCC 36239 / CBS 767 / BCRC 21394 / JCM 1990 / NBRC 0083 / IGC 2968) (Yeast), this protein is ATP-dependent RNA helicase DRS1 (DRS1).